Reading from the N-terminus, the 210-residue chain is MKIVWCGHACFLVEDRGTKILIDPYPDVDEDRIGKVDYILVTHEHMDHYGKTPLIAKLSDAEVIGPKTVYLMAISDGLTKVREIEVGQEIELGDIRVRAFFTEHPTSQYPLGYLIEGSKRVAHLGDTYYSPAFTELRGKVDVLLVPIGGKSTASVREAADIVEMIRPRIAVPMHYGTYSEADPEEFKKELQKRRIWVLVKDLKPYEGFEI.

Belongs to the UPF0173 family.

This is UPF0173 protein PF0020 from Pyrococcus furiosus (strain ATCC 43587 / DSM 3638 / JCM 8422 / Vc1).